A 365-amino-acid chain; its full sequence is Probable caffeine synthase 5 (365 aa).

Tyr18 serves as a coordination point for S-adenosyl-L-homocysteine. Thr25 is a binding site for caffeine. Cys61, Asn66, Asp98, Leu99, Ser134, and Phe135 together coordinate S-adenosyl-L-homocysteine. Residues Tyr152, His155, and Trp156 each contribute to the caffeine site. Mg(2+)-binding residues include Asn173, Asp259, Phe261, and Asn262. Caffeine is bound at residue Phe317.

This sequence belongs to the methyltransferase superfamily. Type-7 methyltransferase family. Mg(2+) serves as cofactor.

It functions in the pathway alkaloid biosynthesis. Functionally, may be involved in the biosynthesis of caffeine. This Camellia sinensis (Tea plant) protein is Probable caffeine synthase 5.